Reading from the N-terminus, the 866-residue chain is Glycoprotein gp2 (866 aa).

Residues 1 to 25 (MGFIYARKLLLCMAVSIYAIGSTTT) form the signal peptide. Disordered stretches follow at residues 24–185 (TTTE…TDTT) and 319–619 (TAAT…IVPQ). The N-linked (GlcNAc...) asparagine; by host glycan is linked to asparagine 48. Residues 319 to 442 (TAATTTAATT…PDSSTGSTST (124 aa)) are compositionally biased toward low complexity. The span at 443-463 (AEPSSTFTLTPSTATPSTDQF) shows a compositional bias: polar residues. 2 stretches are compositionally biased toward low complexity: residues 464–499 (TGSS…EAST) and 514–526 (TPDG…NTTP). A glycan (N-linked (GlcNAc...) asparagine; by host) is linked at asparagine 518. The span at 535–561 (FADTQQTPDNGVSTQHTTINDHTTANA) shows a compositional bias: polar residues. The segment covering 564–574 (HAGHHRGRAGG) has biased composition (basic residues). 2 N-linked (GlcNAc...) asparagine; by host glycosylation sites follow: asparagine 611 and asparagine 659. A helical membrane pass occupies residues 835-855 (FALVAATTLTVTILCLLCCLY).

The protein localises to the virion membrane. In terms of biological role, virulence factor. The chain is Glycoprotein gp2 from Equus caballus (Horse).